The chain runs to 268 residues: NH(3)-dependent NAD(+) synthetase (268 aa).

46–53 (GISGGQDS) contacts ATP. Mg(2+) is bound at residue aspartate 52. Residue arginine 140 participates in deamido-NAD(+) binding. Threonine 160 is a binding site for ATP. Residue glutamate 165 participates in Mg(2+) binding. Deamido-NAD(+)-binding residues include lysine 173 and aspartate 180. Residues lysine 189 and threonine 211 each coordinate ATP. Position 260–261 (260–261 (HK)) interacts with deamido-NAD(+).

The protein belongs to the NAD synthetase family. As to quaternary structure, homodimer.

It carries out the reaction deamido-NAD(+) + NH4(+) + ATP = AMP + diphosphate + NAD(+) + H(+). It functions in the pathway cofactor biosynthesis; NAD(+) biosynthesis; NAD(+) from deamido-NAD(+) (ammonia route): step 1/1. Catalyzes the ATP-dependent amidation of deamido-NAD to form NAD. Uses ammonia as a nitrogen source. This chain is NH(3)-dependent NAD(+) synthetase, found in Buchnera aphidicola subsp. Schizaphis graminum (strain Sg).